The following is a 222-amino-acid chain: uncharacterized protein (222 aa).

A disordered region spans residues Ala142–Leu222. The span at Gln160–Ala169 shows a compositional bias: low complexity. The segment covering Pro182 to Arg196 has biased composition (basic residues).

It belongs to the Rv1128c/1148c/1588c/1702c/1945/3466 family.

This is an uncharacterized protein from Mycobacterium tuberculosis (strain CDC 1551 / Oshkosh).